The chain runs to 636 residues: Threonine--tRNA ligase (636 aa).

One can recognise a TGS domain in the interval 1 to 63; the sequence is MSSISIALPD…KDDSRVEIIT (63 aa). Residues 243-534 are catalytic; that stretch reads DHRRLGRELD…LIEHYAGNFP (292 aa). 3 residues coordinate Zn(2+): Cys335, His386, and His511.

Belongs to the class-II aminoacyl-tRNA synthetase family. Homodimer. Zn(2+) serves as cofactor.

It is found in the cytoplasm. It carries out the reaction tRNA(Thr) + L-threonine + ATP = L-threonyl-tRNA(Thr) + AMP + diphosphate + H(+). Functionally, catalyzes the attachment of threonine to tRNA(Thr) in a two-step reaction: L-threonine is first activated by ATP to form Thr-AMP and then transferred to the acceptor end of tRNA(Thr). Also edits incorrectly charged L-seryl-tRNA(Thr). The sequence is that of Threonine--tRNA ligase from Pelobacter propionicus (strain DSM 2379 / NBRC 103807 / OttBd1).